The primary structure comprises 194 residues: 3-isopropylmalate dehydratase small subunit (194 aa).

Belongs to the LeuD family. LeuD type 1 subfamily. As to quaternary structure, heterodimer of LeuC and LeuD.

The catalysed reaction is (2R,3S)-3-isopropylmalate = (2S)-2-isopropylmalate. It participates in amino-acid biosynthesis; L-leucine biosynthesis; L-leucine from 3-methyl-2-oxobutanoate: step 2/4. In terms of biological role, catalyzes the isomerization between 2-isopropylmalate and 3-isopropylmalate, via the formation of 2-isopropylmaleate. The protein is 3-isopropylmalate dehydratase small subunit of Anoxybacillus flavithermus (strain DSM 21510 / WK1).